Reading from the N-terminus, the 1068-residue chain is DNA-directed RNA polymerase subunit beta (1068 aa).

This sequence belongs to the RNA polymerase beta chain family. As to quaternary structure, in plastids the minimal PEP RNA polymerase catalytic core is composed of four subunits: alpha, beta, beta', and beta''. When a (nuclear-encoded) sigma factor is associated with the core the holoenzyme is formed, which can initiate transcription.

It is found in the plastid. The protein resides in the chloroplast. The enzyme catalyses RNA(n) + a ribonucleoside 5'-triphosphate = RNA(n+1) + diphosphate. Its function is as follows. DNA-dependent RNA polymerase catalyzes the transcription of DNA into RNA using the four ribonucleoside triphosphates as substrates. The protein is DNA-directed RNA polymerase subunit beta of Staurastrum punctulatum (Green alga).